A 91-amino-acid chain; its full sequence is Probable Fe(2+)-trafficking protein (91 aa).

Belongs to the Fe(2+)-trafficking protein family.

Could be a mediator in iron transactions between iron acquisition and iron-requiring processes, such as synthesis and/or repair of Fe-S clusters in biosynthetic enzymes. This is Probable Fe(2+)-trafficking protein from Paraburkholderia phytofirmans (strain DSM 17436 / LMG 22146 / PsJN) (Burkholderia phytofirmans).